Consider the following 500-residue polypeptide: Cytochrome P450 2D26 (500 aa).

A Phosphoserine modification is found at Ser-249. Cys-446 contacts heme.

Belongs to the cytochrome P450 family. Heme serves as cofactor.

The protein localises to the endoplasmic reticulum membrane. It localises to the microsome membrane. The enzyme catalyses an organic molecule + reduced [NADPH--hemoprotein reductase] + O2 = an alcohol + oxidized [NADPH--hemoprotein reductase] + H2O + H(+). Cytochromes P450 are a group of heme-thiolate monooxygenases. In liver microsomes, this enzyme is involved in an NADPH-dependent electron transport pathway. It oxidizes a variety of structurally unrelated compounds, including steroids, fatty acids, and xenobiotics. In Rattus norvegicus (Rat), this protein is Cytochrome P450 2D26 (Cyp2d26).